Here is a 261-residue protein sequence, read N- to C-terminus: Protein STAY-GREEN, chloroplastic (261 aa).

The transit peptide at 1–54 directs the protein to the chloroplast; that stretch reads MDTLTSAPLLTTKFKPSFSPQQKPCFPHRRRFENGKKNQSIVPVARLFGPAIFE.

It belongs to the staygreen family.

The protein localises to the plastid. Its subcellular location is the chloroplast. Its function is as follows. Probably involved in the disassembling mechanism of the intact light-harvesting complex of photosystem II (LHCII) in the thylakoid membranes. Required for the chlorophyll breakdown pathway. Acts independent and upstream of pheophorbide a oxygenase (PAO). This Pisum sativum (Garden pea) protein is Protein STAY-GREEN, chloroplastic (SGR).